A 372-amino-acid chain; its full sequence is Cytochrome b (372 aa).

Transmembrane regions (helical) follow at residues 25–45 (FGSM…FLAV), 69–90 (WMMQ…YIHM), 105–125 (WLSG…GYVL), and 170–190 (FFAL…LHIM). Heme b contacts are provided by histidine 75 and histidine 89. The heme b site is built by histidine 174 and histidine 188. Histidine 193 provides a ligand contact to a ubiquinone. The next 4 helical transmembrane spans lie at 218-238 (YKDL…ISFL), 280-300 (LGGA…PFTH), 312-332 (FMQL…WTAT), and 339-358 (YTTI…MSNL).

The protein belongs to the cytochrome b family. In terms of assembly, the cytochrome bc1 complex contains 3 respiratory subunits (MT-CYB, CYC1 and UQCRFS1), 2 core proteins (UQCRC1 and UQCRC2) and probably 6 low-molecular weight proteins. Requires heme b as cofactor.

The protein resides in the mitochondrion inner membrane. Component of the ubiquinol-cytochrome c reductase complex (complex III or cytochrome b-c1 complex) that is part of the mitochondrial respiratory chain. The b-c1 complex mediates electron transfer from ubiquinol to cytochrome c. Contributes to the generation of a proton gradient across the mitochondrial membrane that is then used for ATP synthesis. The protein is Cytochrome b (MT-CYB) of Sanzinia madagascariensis (Madagascar tree boa).